The primary structure comprises 438 residues: High-affinity gluconate transporter (438 aa).

13 helical membrane passes run P2 to M22, N23 to L43, A52 to G72, V108 to I128, I134 to L154, T174 to A194, F222 to A242, F258 to G278, L292 to F312, S327 to L347, I349 to I369, A370 to F390, and M418 to I438.

Belongs to the GntP permease family.

It localises to the cell inner membrane. The protein operates within carbohydrate acid metabolism; D-gluconate degradation. Functionally, part of the gluconate utilization system Gnt-I; high-affinity intake of gluconate. This Escherichia coli (strain K12) protein is High-affinity gluconate transporter (gntT).